A 275-amino-acid polypeptide reads, in one-letter code: Thiazole synthase (275 aa).

Lys116 serves as the catalytic Schiff-base intermediate with DXP. 1-deoxy-D-xylulose 5-phosphate contacts are provided by residues Gly177, 203–204 (AG), and 225–226 (NT).

This sequence belongs to the ThiG family. Homotetramer. Forms heterodimers with either ThiH or ThiS.

The protein localises to the cytoplasm. The enzyme catalyses [ThiS sulfur-carrier protein]-C-terminal-Gly-aminoethanethioate + 2-iminoacetate + 1-deoxy-D-xylulose 5-phosphate = [ThiS sulfur-carrier protein]-C-terminal Gly-Gly + 2-[(2R,5Z)-2-carboxy-4-methylthiazol-5(2H)-ylidene]ethyl phosphate + 2 H2O + H(+). It participates in cofactor biosynthesis; thiamine diphosphate biosynthesis. Its function is as follows. Catalyzes the rearrangement of 1-deoxy-D-xylulose 5-phosphate (DXP) to produce the thiazole phosphate moiety of thiamine. Sulfur is provided by the thiocarboxylate moiety of the carrier protein ThiS. In vitro, sulfur can be provided by H(2)S. The chain is Thiazole synthase from Acaryochloris marina (strain MBIC 11017).